A 249-amino-acid chain; its full sequence is Large ribosomal subunit protein uL22m (249 aa).

The N-terminal 22 residues, methionine 1–glycine 22, are a transit peptide targeting the mitochondrion. Residues alanine 70–glutamine 98 are disordered. Basic and acidic residues predominate over residues glutamine 72–glutamine 98.

This sequence belongs to the universal ribosomal protein uL22 family. In terms of assembly, component of the mitochondrial large ribosomal subunit (mt-LSU). Mature yeast 74S mitochondrial ribosomes consist of a small (37S) and a large (54S) subunit. The 37S small subunit contains a 15S ribosomal RNA (15S mt-rRNA) and at least 32 different proteins. The 54S large subunit contains a 21S rRNA (21S mt-rRNA) and at least 45 different proteins. uL22m forms the wall of the exit tunnel.

It is found in the mitochondrion. Functionally, component of the mitochondrial ribosome (mitoribosome), a dedicated translation machinery responsible for the synthesis of mitochondrial genome-encoded proteins, including at least some of the essential transmembrane subunits of the mitochondrial respiratory chain. The mitoribosomes are attached to the mitochondrial inner membrane and translation products are cotranslationally integrated into the membrane. This Schizosaccharomyces pombe (strain 972 / ATCC 24843) (Fission yeast) protein is Large ribosomal subunit protein uL22m (mrpl22).